Here is a 145-residue protein sequence, read N- to C-terminus: Neuromedin-S (145 aa).

The N-terminal stretch at Met1–Gly27 is a signal peptide. 2 propeptides span residues Phe28–Tyr89 and Phe92–Thr117. Position 136 is an asparagine amide (Asn136). The propeptide occupies Val140–His145.

This sequence belongs to the NmU family. As to expression, expressed by the skin glands.

It is found in the secreted. Its function is as follows. Stimulates uterine smooth muscle contraction (EC(50)=1.6 nM). Synthetic peptide NmS-17 induces calcium mobilization in CHO cells transfected with either human FM-3/GPR66 (EC(50)=0.085 nM) or FM-4/TGR-1 (EC(50)=0.231 nM) NmU/NmS receptors. This Bombina maxima (Giant fire-bellied toad) protein is Neuromedin-S (nms).